A 70-amino-acid polypeptide reads, in one-letter code: Venom antimicrobial peptide-6 (70 aa).

Residues 1-23 (MKSQTFFLLFLVVFLLAITQSEA) form the signal peptide. Residue Phe-36 is modified to Phenylalanine amide. The propeptide occupies 40 to 70 (SLRDMDTMKYLYDPSLSAADLKTLQKLMENY).

This sequence belongs to the non-disulfide-bridged peptide (NDBP) superfamily. Short antimicrobial peptide (group 4) family. As to expression, expressed by the venom gland.

Its subcellular location is the secreted. The protein resides in the target cell membrane. Amphipathic peptide that exhibits extensive cytolytic activities against both prokaryotic and eukaryotic cells. Is more potent against Gram-positive bacteria (lethal concentration (LC)=0.25-2.9 uM) than against Gram-negative bacteria (LC=6.2-&gt;50 uM), and fungi ((LC)=14.1-&gt;50 uM). Shows hemolytic activity against rabbit erythrocytes (37.7% of inhibition at 6.25 uM) and cytolysis against rat dorsal root ganglions. In vivo, intravenous injection into mice tail provokes uncomfortable symptoms with a death rate of 12.5%. This is Venom antimicrobial peptide-6 from Mesobuthus eupeus (Lesser Asian scorpion).